The primary structure comprises 255 residues: Lactose phosphotransferase system repressor (255 aa).

Residues 3–58 form the HTH deoR-type domain; sequence KKRRLEKILDMLKIDGTITIKEIIDELDISDMTARRDLDALEADGLLTRTHGGAQL. A DNA-binding region (H-T-H motif) is located at residues 20–39; that stretch reads ITIKEIIDELDISDMTARRD.

Its function is as follows. Repressor of the lactose catabolism operon. Galactose-6-phosphate is the inducer. In Lactococcus lactis subsp. lactis (Streptococcus lactis), this protein is Lactose phosphotransferase system repressor (lacR).